The following is a 450-amino-acid chain: Glucose-6-phosphate isomerase (450 aa).

The active-site Proton donor is the Glu-290. Catalysis depends on residues His-311 and Lys-425.

Belongs to the GPI family.

It localises to the cytoplasm. The enzyme catalyses alpha-D-glucose 6-phosphate = beta-D-fructose 6-phosphate. The protein operates within carbohydrate biosynthesis; gluconeogenesis. It functions in the pathway carbohydrate degradation; glycolysis; D-glyceraldehyde 3-phosphate and glycerone phosphate from D-glucose: step 2/4. Catalyzes the reversible isomerization of glucose-6-phosphate to fructose-6-phosphate. The sequence is that of Glucose-6-phosphate isomerase from Leuconostoc mesenteroides subsp. mesenteroides (strain ATCC 8293 / DSM 20343 / BCRC 11652 / CCM 1803 / JCM 6124 / NCDO 523 / NBRC 100496 / NCIMB 8023 / NCTC 12954 / NRRL B-1118 / 37Y).